A 136-amino-acid polypeptide reads, in one-letter code: Probable endoribonuclease MazF7 (136 aa).

Positions 115 to 136 (TGPERGEAATHSPVRWTGGRDP) are disordered.

Belongs to the PemK/MazF family. As to quaternary structure, forms a complex with cognate antitoxin MazE7.

Toxic component of a type II toxin-antitoxin (TA) system. Upon expression in E.coli and M.smegmatis inhibits cell growth and colony formation. Its toxic effect is neutralized by coexpression with cognate antitoxin MazE7. Probably an endoribonuclease. This is Probable endoribonuclease MazF7 (mazF7) from Mycobacterium tuberculosis (strain ATCC 25618 / H37Rv).